Reading from the N-terminus, the 257-residue chain is MFITSPLEQFELNNYFGFYLFNYHFDFSNFGFYLGLSALIAISLAIINLTPYGSGAKIVPQKFGIAMEAIYFTMLNLVENQIHSSKTVSGQSYFPFIWSLFVLILFSNLLRLIPYGYATTAQLIFTLGLSISILIGATILGLQQHKAKVFGLFLPSGTPTPLIPLLVLIEFVSYIARGLSLGIRLGANIIAGHLTMSILGGLIFTFMGLNLITFIIGFLPITVLVAISLLEFGIAFIQAYVFAILTCGFINDSLNLH.

A propeptide spans 1-4 (MFIT) (removed in mature form). Transmembrane regions (helical) follow at residues 27–47 (FSNF…LAII), 58–78 (IVPQ…LNLV), 93–113 (YFPF…LRLI), 122–142 (QLIF…ILGL), 149–169 (VFGL…LVLI), 189–209 (IIAG…FMGL), 214–234 (FIIG…EFGI), and 236–256 (FIQA…SLNL).

Belongs to the ATPase A chain family. F-type ATPases have 2 components, CF(1) - the catalytic core - and CF(0) - the membrane proton channel. CF(1) has five subunits: alpha(3), beta(3), gamma(1), delta(1), epsilon(1). CF(0) has three main subunits: a, b and c.

Its subcellular location is the mitochondrion inner membrane. Mitochondrial membrane ATP synthase (F(1)F(0) ATP synthase or Complex V) produces ATP from ADP in the presence of a proton gradient across the membrane which is generated by electron transport complexes of the respiratory chain. F-type ATPases consist of two structural domains, F(1) - containing the extramembraneous catalytic core and F(0) - containing the membrane proton channel, linked together by a central stalk and a peripheral stalk. During catalysis, ATP synthesis in the catalytic domain of F(1) is coupled via a rotary mechanism of the central stalk subunits to proton translocation. Key component of the proton channel; it may play a direct role in the translocation of protons across the membrane. The polypeptide is ATP synthase subunit a (atp6) (Schizosaccharomyces pombe (strain 972 / ATCC 24843) (Fission yeast)).